The sequence spans 472 residues: MGCDRNCGLITGAVIGAVLAVFGGILMPVGDLLIEKTIKREVVLEEGTIAFKNWVKTGTTVYRQFWIFDVQNPEEVAKNSSKIKVKQRGPYTYRVRYLAKENITQDPKDSTVSFVQPNGAIFEPSLSVGTENDNFTVLNLAVAAAPHIYTNSFVQGVLNSLIKKSKSSMFQTRSLKELLWGYKDPFLSLVPYPISTTVGVFYPYNNTVDGVYKVFNGKDNISKVAIIDTYKGKRNLSYWESYCDMINGTDAASFPPFVEKSQTLRFFSSDICRSIYAVFESEVNLKGIPVYRFVLPANAFASPLQNPDNHCFCTEKVISNNCTSYGVLDIGKCKEGKPVYISLPHFLHASPDVSEPIEGLNPNEDEHRTYLDVEPITGFTLQFAKRLQVNILVKPARKIEALKNLKRPYIVPILWLNETGTIGDEKAEMFRNQVTGKIKLLGLVEMVLLGVGVVMFVAFMISYCACRSKNGK.

Topologically, residues 2 to 7 are cytoplasmic; sequence GCDRNC. 2 S-palmitoyl cysteine lipidation sites follow: Cys-3 and Cys-7. Residues 8-29 traverse the membrane as a helical segment; it reads GLITGAVIGAVLAVFGGILMPV. Residues 30 to 439 are Extracellular-facing; that stretch reads GDLLIEKTIK…FRNQVTGKIK (410 aa). N-linked (GlcNAc...) asparagine glycosylation is found at Asn-79, Asn-102, Asn-134, Asn-205, Asn-220, Asn-235, Asn-247, Asn-321, and Asn-417. Residues 93 to 120 form a required for interaction with thrombospondins, THBS1 and THBS2 region; the sequence is YRVRYLAKENITQDPKDSTVSFVQPNGA. 3 disulfide bridges follow: Cys-243-Cys-311, Cys-272-Cys-333, and Cys-313-Cys-322. A helical membrane pass occupies residues 440–461; that stretch reads LLGLVEMVLLGVGVVMFVAFMI. The segment at 460-472 is interaction with PTK2, PXN and LYN; the sequence is MISYCACRSKNGK. Residues 462-472 lie on the Cytoplasmic side of the membrane; that stretch reads SYCACRSKNGK. Residues Cys-464 and Cys-466 are each lipidated (S-palmitoyl cysteine). Glycyl lysine isopeptide (Lys-Gly) (interchain with G-Cter in ubiquitin) cross-links involve residues Lys-469 and Lys-472.

The protein belongs to the CD36 family. In terms of assembly, interacts with THBS1 and THBS2; the interactions mediate the THBS antiangiogenic activity. Upon interaction with a ligand, such as oxidized low-density lipoprotein (oxLDL) or amyloid-beta 42, rapidly forms a complex with TLR4 and TLR6; the complex is internalized and triggers an inflammatory signal. Through its C-terminus, interacts with PTK2, PXN and LYN, but not with SRC. LYN kinase activity is required for facilitating TLR4:TLR6 heterodimerization and signal initiation. Upon interaction with ligands such as diacylated lipopeptides, interacts with the TLR2:TLR6 heterodimer. Interacts with CD9, CD81, FCER1G, ITGB2 and/or ITGB2; forming a membrane heteromeric complex required for the internalization of CD36 and its ligands. Interacts (when palmitoylated) with ARF6; this interaction mediates CD36 transport to the plasma membrane. Palmitoylated by ZDHHC5. Palmitoylation is required for proper localization at the plasma membrane. In terms of processing, ubiquitinated at Lys-469 and Lys-472. Ubiquitination is induced by fatty acids such as oleic acid and leads to degradation by the proteasome. Ubiquitination and degradation are inhibited by insulin which blocks the effect of fatty acids. As to expression, expressed at high levels in heart, intestine, spleen, adipose tissue, skeletal muscle and, at lower levels, in testes.

Its subcellular location is the cell membrane. It is found in the membrane raft. The protein resides in the golgi apparatus. The protein localises to the apical cell membrane. It catalyses the reaction butanoate(out) = butanoate(in). The catalysed reaction is (9Z)-octadecenoate(out) = (9Z)-octadecenoate(in). The enzyme catalyses (9Z,12Z)-octadecadienoate(out) = (9Z,12Z)-octadecadienoate(in). It carries out the reaction tetradecanoate(out) = tetradecanoate(in). It catalyses the reaction hexadecanoate(out) = hexadecanoate(in). The catalysed reaction is tetracosanoate(out) = tetracosanoate(in). Multifunctional glycoprotein that acts as a receptor for a broad range of ligands. Ligands can be of proteinaceous nature like thrombospondin, fibronectin, collagen or amyloid-beta as well as of lipidic nature such as oxidized low-density lipoprotein (oxLDL), anionic phospholipids, long-chain fatty acids and bacterial diacylated lipopeptides. They are generally multivalent and can therefore engage multiple receptors simultaneously, the resulting formation of CD36 clusters initiates signal transduction and internalization of receptor-ligand complexes. The dependency on coreceptor signaling is strongly ligand specific. Cellular responses to these ligands are involved in angiogenesis, inflammatory response, fatty acid metabolism, taste and dietary fat processing in the intestine. Binds long-chain fatty acids and facilitates their transport into cells, thus participating in muscle lipid utilization, adipose energy storage, and gut fat absorption. Mechanistically, binding of fatty acids activates downstream kinase LYN, which phosphorylates the palmitoyltransferase ZDHHC5 and inactivates it, resulting in the subsequent depalmitoylation of CD36 and caveolar endocytosis. In the small intestine, plays a role in proximal absorption of dietary fatty acid and cholesterol for optimal chylomicron formation, possibly through the activation of MAPK1/3 (ERK1/2) signaling pathway. Involved in oral fat perception and preferences. Detection into the tongue of long-chain fatty acids leads to a rapid and sustained rise in flux and protein content of pancreatobiliary secretions. In taste receptor cells, mediates the induction of an increase in intracellular calcium levels by long-chain fatty acids, leading to the activation of the gustatory neurons in the nucleus of the solitary tract. Important factor in both ventromedial hypothalamus neuronal sensing of long-chain fatty acid and the regulation of energy and glucose homeostasis. Receptor for thrombospondins, THBS1 and THBS2, mediating their antiangiogenic effects. As a coreceptor for TLR4:TLR6 heterodimer, promotes inflammation in monocytes/macrophages. Upon ligand binding, such as oxLDL or amyloid-beta 42, interacts with the heterodimer TLR4:TLR6, the complex is internalized and triggers inflammatory response, leading to NF-kappa-B-dependent production of CXCL1, CXCL2 and CCL9 cytokines, via MYD88 signaling pathway, and CCL5 cytokine, via TICAM1 signaling pathway, as well as IL1B secretion, through the priming and activation of the NLRP3 inflammasome. Selective and nonredundant sensor of microbial diacylated lipopeptide that signal via TLR2:TLR6 heterodimer, this cluster triggers signaling from the cell surface, leading to the NF-kappa-B-dependent production of TNF, via MYD88 signaling pathway and subsequently is targeted to the Golgi in a lipid-raft dependent pathway. This Rattus norvegicus (Rat) protein is Platelet glycoprotein 4 (Cd36).